We begin with the raw amino-acid sequence, 741 residues long: Linoleate 9S-lipoxygenase (741 aa).

Residues 1–53 form the PLAT domain; that stretch reads IPGAFYIKNFMQVEFYLKSLTLEDIPNHGTIHFICNSWIYNSKVYKSDRIFFA. One can recognise a Lipoxygenase domain in the interval 56 to 741; the sequence is TYLPSETPAP…SEEGLTFRGI (686 aa). A disordered region spans residues 108–144; that stretch reads ALARPVLGGSTLPYPRRGRTGRPKTKKDPNSEKPSDF. Basic residues predominate over residues 123 to 132; sequence RRGRTGRPKT. Residues 133–144 show a composition bias toward basic and acidic residues; sequence KKDPNSEKPSDF. The Fe cation site is built by H407, H412, H598, and N602.

Belongs to the lipoxygenase family. As to quaternary structure, monomer. Fe cation is required as a cofactor.

It localises to the cytoplasm. It catalyses the reaction (9Z,12Z)-octadecadienoate + O2 = (9S)-hydroperoxy-(10E,12Z)-octadecadienoate. The catalysed reaction is (9Z,12Z)-octadecadienoate + O2 = (13S)-hydroperoxy-(9Z,11E)-octadecadienoate. It carries out the reaction (9Z,12Z,15Z)-octadecatrienoate + O2 = (13S)-hydroperoxy-(9Z,11E,15Z)-octadecatrienoate. The protein operates within lipid metabolism; oxylipin biosynthesis. Plant lipoxygenase may be involved in a number of diverse aspects of plant physiology including growth and development, pest resistance, and senescence or responses to wounding. It catalyzes the hydroperoxidation of lipids containing a cis,cis-1,4-pentadiene structure. In Phaseolus vulgaris (Kidney bean), this protein is Linoleate 9S-lipoxygenase.